Reading from the N-terminus, the 394-residue chain is S-adenosylmethionine synthase (394 aa).

Mg(2+) is bound at residue glutamate 10. Histidine 16 provides a ligand contact to ATP. Glutamate 44 is a K(+) binding site. Glutamate 57 and glutamine 100 together coordinate L-methionine. ATP-binding positions include 168–170 (DGK), 236–239 (SGRF), aspartate 247, 253–254 (RK), alanine 270, lysine 274, and lysine 278. Residue aspartate 247 participates in L-methionine binding. L-methionine is bound at residue lysine 278.

The protein belongs to the AdoMet synthase family. Homotetramer. Mn(2+) is required as a cofactor. Mg(2+) serves as cofactor. It depends on Co(2+) as a cofactor. Requires K(+) as cofactor.

Its subcellular location is the cytoplasm. It catalyses the reaction L-methionine + ATP + H2O = S-adenosyl-L-methionine + phosphate + diphosphate. The protein operates within amino-acid biosynthesis; S-adenosyl-L-methionine biosynthesis; S-adenosyl-L-methionine from L-methionine: step 1/1. Its function is as follows. Catalyzes the formation of S-adenosylmethionine from methionine and ATP. The reaction comprises two steps that are both catalyzed by the same enzyme: formation of S-adenosylmethionine (AdoMet) and triphosphate, and subsequent hydrolysis of the triphosphate. In Medicago truncatula (Barrel medic), this protein is S-adenosylmethionine synthase (METK).